Consider the following 206-residue polypeptide: Bis(5'-adenosyl)-triphosphatase (206 aa).

In terms of domain architecture, HIT spans 3-115; that stretch reads KPIYFSKFLV…KINNVGDLIY (113 aa). A Histidine triad motif motif is present at residues 96 to 100; it reads HLHTH. His-98 serves as the catalytic Tele-AMP-histidine intermediate. The interval 143–164 is disordered; it reads RQARKNNSTSATVDGDELSQGP.

As to quaternary structure, homodimer. The cofactor is Mn(2+).

The protein resides in the cytoplasm. It is found in the nucleus. It localises to the mitochondrion. The enzyme catalyses P(1),P(3)-bis(5'-adenosyl) triphosphate + H2O = AMP + ADP + 2 H(+). Cleaves A-5'-PPP-5'A to yield AMP and ADP. Can cleave all dinucleoside polyphosphates, provided the phosphate chain contains at least 3 phosphates and that 1 of the 2 bases composing the nucleotide is a purine. Is most effective on dinucleoside triphosphates. Negatively regulates intracellular dinucleoside polyphosphate levels, which elevate following heat shock. The chain is Bis(5'-adenosyl)-triphosphatase (HNT2) from Saccharomyces cerevisiae (strain RM11-1a) (Baker's yeast).